The sequence spans 533 residues: Putative adhesin P1-like protein MPN_409 (533 aa).

2 disordered regions span residues 15-45 and 92-166; these read KNHRGVDDITAPKTGAGSSSGTSTNTSGSRS and SGWR…SITP. Residues 28 to 45 are compositionally biased toward low complexity; that stretch reads TGAGSSSGTSTNTSGSRS. Residues 95–107 show a composition bias toward basic and acidic residues; it reads RNDKNGQSDENHT.

It belongs to the adhesin P1 family.

In Mycoplasma pneumoniae (strain ATCC 29342 / M129 / Subtype 1) (Mycoplasmoides pneumoniae), this protein is Putative adhesin P1-like protein MPN_409.